The chain runs to 147 residues: 3-dehydroquinate dehydratase (147 aa).

Tyrosine 23 (proton acceptor) is an active-site residue. Residues asparagine 75, histidine 81, and aspartate 88 each contribute to the substrate site. The active-site Proton donor is histidine 101. Substrate-binding positions include leucine 102–serine 103 and arginine 112.

This sequence belongs to the type-II 3-dehydroquinase family. In terms of assembly, homododecamer.

It carries out the reaction 3-dehydroquinate = 3-dehydroshikimate + H2O. The protein operates within metabolic intermediate biosynthesis; chorismate biosynthesis; chorismate from D-erythrose 4-phosphate and phosphoenolpyruvate: step 3/7. Catalyzes a trans-dehydration via an enolate intermediate. The chain is 3-dehydroquinate dehydratase from Hahella chejuensis (strain KCTC 2396).